The sequence spans 240 residues: ATP-dependent dethiobiotin synthetase BioD (240 aa).

15–20 (EIGKTF) is a binding site for ATP. T19 contributes to the Mg(2+) binding site. The active site involves K40. ATP contacts are provided by residues D57, 118 to 121 (EGVG), and 178 to 179 (NR). Residues D57 and E118 each contribute to the Mg(2+) site.

This sequence belongs to the dethiobiotin synthetase family. Homodimer. Requires Mg(2+) as cofactor.

The protein localises to the cytoplasm. It catalyses the reaction (7R,8S)-7,8-diammoniononanoate + CO2 + ATP = (4R,5S)-dethiobiotin + ADP + phosphate + 3 H(+). Its pathway is cofactor biosynthesis; biotin biosynthesis; biotin from 7,8-diaminononanoate: step 1/2. Functionally, catalyzes a mechanistically unusual reaction, the ATP-dependent insertion of CO2 between the N7 and N8 nitrogen atoms of 7,8-diaminopelargonic acid (DAPA, also called 7,8-diammoniononanoate) to form a ureido ring. The protein is ATP-dependent dethiobiotin synthetase BioD of Burkholderia thailandensis (strain ATCC 700388 / DSM 13276 / CCUG 48851 / CIP 106301 / E264).